The sequence spans 56 residues: uncharacterized protein (56 aa).

This is an uncharacterized protein from Acidianus convivator (ABV).